We begin with the raw amino-acid sequence, 358 residues long: Phospho-N-acetylmuramoyl-pentapeptide-transferase (358 aa).

Helical transmembrane passes span 28–48 (WALATALLVSIVVGPRFIAWL), 72–92 (TMGGLLIGFAVTFSVLLWADL), 96–116 (YIWLTLLVFTGFGFIGFLDDY), 133–153 (FLWQVGVAVAAMYLLVQLPAY), 164–184 (GLTPDLGWLYIPFAVAVMVGS), 196–216 (GLAIGPTIVAGIVFSIFIYVA), 233–253 (VGEVAVFCGALVGAGLGFLWF), 260–280 (VFMGDVGSLSLGGTLGFLAVL), 285–305 (LLLLVVGGLFVVETLSVILQV), and 335–355 (KIIIRFWITSALLGLIALSVL).

This sequence belongs to the glycosyltransferase 4 family. MraY subfamily. It depends on Mg(2+) as a cofactor.

It localises to the cell inner membrane. It carries out the reaction UDP-N-acetyl-alpha-D-muramoyl-L-alanyl-gamma-D-glutamyl-meso-2,6-diaminopimeloyl-D-alanyl-D-alanine + di-trans,octa-cis-undecaprenyl phosphate = di-trans,octa-cis-undecaprenyl diphospho-N-acetyl-alpha-D-muramoyl-L-alanyl-D-glutamyl-meso-2,6-diaminopimeloyl-D-alanyl-D-alanine + UMP. It participates in cell wall biogenesis; peptidoglycan biosynthesis. Functionally, catalyzes the initial step of the lipid cycle reactions in the biosynthesis of the cell wall peptidoglycan: transfers peptidoglycan precursor phospho-MurNAc-pentapeptide from UDP-MurNAc-pentapeptide onto the lipid carrier undecaprenyl phosphate, yielding undecaprenyl-pyrophosphoryl-MurNAc-pentapeptide, known as lipid I. This chain is Phospho-N-acetylmuramoyl-pentapeptide-transferase, found in Nitratidesulfovibrio vulgaris (strain ATCC 29579 / DSM 644 / CCUG 34227 / NCIMB 8303 / VKM B-1760 / Hildenborough) (Desulfovibrio vulgaris).